Consider the following 551-residue polypeptide: Cytosolic Fe-S cluster assembly factor NAR1 (551 aa).

Residues C20, C57, C60, C63, C178, and C242 each coordinate [4Fe-4S] cluster. The tract at residues 395–435 is disordered; that stretch reads DPSGHKKRSVRRVAALRSRGRKDSSSEDSTGTPSAISNALG. Over residues 421 to 431 the composition is skewed to polar residues; it reads EDSTGTPSAIS. Position 451 (C451) interacts with [4Fe-4S] cluster.

The protein belongs to the NARF family.

Component of the cytosolic Fe/S protein assembly machinery. Required for maturation of extramitochondrial Fe/S proteins. May play a role in the transfer of pre-assembled Fe/S clusters to target apoproteins. This chain is Cytosolic Fe-S cluster assembly factor NAR1 (NAR1), found in Candida glabrata (strain ATCC 2001 / BCRC 20586 / JCM 3761 / NBRC 0622 / NRRL Y-65 / CBS 138) (Yeast).